The primary structure comprises 359 residues: Methionine import ATP-binding protein MetN (359 aa).

Residues 1–21 (MSTPASTPAPDGSHQRDHHPG) are disordered. Residues 24–264 (VEFRGVTKVF…PQTTVAQRFV (241 aa)) enclose the ABC transporter domain. 61-68 (GYSGAGKS) provides a ligand contact to ATP.

The protein belongs to the ABC transporter superfamily. Methionine importer (TC 3.A.1.24) family. As to quaternary structure, the complex is composed of two ATP-binding proteins (MetN), two transmembrane proteins (MetI) and a solute-binding protein (MetQ).

It localises to the cell membrane. The catalysed reaction is L-methionine(out) + ATP + H2O = L-methionine(in) + ADP + phosphate + H(+). It carries out the reaction D-methionine(out) + ATP + H2O = D-methionine(in) + ADP + phosphate + H(+). Its function is as follows. Part of the ABC transporter complex MetNIQ involved in methionine import. Responsible for energy coupling to the transport system. The chain is Methionine import ATP-binding protein MetN from Corynebacterium efficiens (strain DSM 44549 / YS-314 / AJ 12310 / JCM 11189 / NBRC 100395).